Here is a 446-residue protein sequence, read N- to C-terminus: Putative ankyrin repeat protein L273 (446 aa).

ANK repeat units lie at residues 71–100 (NGEFLLQLKVPSKNHELVVISVESGWKSNM), 124–153 (DHNKLVSLARKYLNSEMLDFLIDKGLRMRP), 206–237 (TDIENLFCELSKGKFVLEVLIPVNEFDKKILM), 245–277 (VWVSEVYCVGYQNLDDISILQHLIALGCNKMHV), 303–332 (ELEYALCIAAVSGNFNVFSSIINTVKNSYY), and 365–394 (YTDIILVLAVIGGSVEIICLLLKYFYQQII).

This is Putative ankyrin repeat protein L273 from Acanthamoeba polyphaga (Amoeba).